The following is a 143-amino-acid chain: Transcriptional regulator SlyA (143 aa).

Positions 2–135 (ESTLGSDLAR…LSTLVQKLEQ (134 aa)) constitute an HTH marR-type domain. Residues 49-72 (QIQLAKAIGIEQPSLVRTLDQLEE) constitute a DNA-binding region (H-T-H motif).

Belongs to the SlyA family. As to quaternary structure, homodimer.

Functionally, transcription regulator that can specifically activate or repress expression of target genes. Regulates the cpm operon, which contains cpmA, cpmB, cpmC, cpmD, cpmE, cpmF, cpmG and cpmH, involved in carbapenem-like antibiotic production. This chain is Transcriptional regulator SlyA, found in Photorhabdus laumondii subsp. laumondii (strain DSM 15139 / CIP 105565 / TT01) (Photorhabdus luminescens subsp. laumondii).